The chain runs to 475 residues: Lipoprotein lipase (475 aa).

The first 27 residues, M1 to A27, serve as a signal peptide directing secretion. An interaction with GPIHBP1 region spans residues G32–T53. An intrachain disulfide couples C54 to C67. N70 carries N-linked (GlcNAc...) asparagine glycosylation. Residue Y121 is modified to 3'-nitrotyrosine. Catalysis depends on S159, which acts as the Nucleophile. Catalysis depends on D183, which acts as the Charge relay system. Residue Y191 is modified to 3'-nitrotyrosine. The Ca(2+) site is built by A194, R197, S199, and D202. A disulfide bridge links C243 with C266. The active-site Charge relay system is H268. 2 cysteine pairs are disulfide-bonded: C291-C310 and C302-C305. The PLAT domain occupies F341–K464. Position 343 is a 3'-nitrotyrosine (Y343). N-linked (GlcNAc...) asparagine glycosylation occurs at N386. Positions W417–W421 are important for interaction with lipoprotein particles. An important for heparin binding region spans residues K430–K434. The tract at residues I443–D467 is interaction with GPIHBP1. A disulfide bridge connects residues C445 and C465.

Belongs to the AB hydrolase superfamily. Lipase family. As to quaternary structure, homodimer. Interacts with GPIHBP1 with 1:1 stoichiometry. Interacts with APOC2; the interaction activates LPL activity in the presence of lipids. Interaction with heparan sulfate proteoglycans is required to protect LPL against loss of activity. Associates with lipoprotein particles in blood plasma. Interacts with LMF1 and SEL1L; interaction with SEL1L is required to prevent aggregation of newly synthesized LPL in the endoplasmic reticulum (ER), and for normal export of LPL from the ER to the extracellular space. Interacts with SORL1; SORL1 acts as a sorting receptor, promoting LPL localization to endosomes and later to lysosomes, leading to degradation of newly synthesized LPL. Tyrosine nitration after lipopolysaccharide (LPS) challenge down-regulates the lipase activity.

It is found in the cell membrane. The protein localises to the secreted. It localises to the extracellular space. Its subcellular location is the extracellular matrix. It catalyses the reaction a triacylglycerol + H2O = a diacylglycerol + a fatty acid + H(+). Its activity is regulated as follows. The apolipoprotein APOC2 acts as a coactivator of LPL activity. Ca(2+) binding promotes protein stability and formation of the active homodimer. Interaction with GPIHBP1 protects LPL against inactivation by ANGPTL4. Its function is as follows. Key enzyme in triglyceride metabolism. Catalyzes the hydrolysis of triglycerides from circulating chylomicrons and very low density lipoproteins (VLDL), and thereby plays an important role in lipid clearance from the blood stream, lipid utilization and storage. Mediates margination of triglyceride-rich lipoprotein particles in capillaries. Recruited to its site of action on the luminal surface of vascular endothelium by binding to GPIHBP1 and cell surface heparan sulfate proteoglycans. The sequence is that of Lipoprotein lipase (LPL) from Neovison vison (American mink).